A 269-amino-acid polypeptide reads, in one-letter code: Putative hydro-lyase Aave_3512 (269 aa).

This sequence belongs to the D-glutamate cyclase family.

The polypeptide is Putative hydro-lyase Aave_3512 (Paracidovorax citrulli (strain AAC00-1) (Acidovorax citrulli)).